The sequence spans 386 residues: Demethylsterigmatocystin 6-O-methyltransferase (386 aa).

Position 137-150 (137-150) interacts with substrate; sequence FDISGPCTQILPDF. Positions 177-197 are substrate binding; the sequence is MFEWMPQHPKHMESLGHLMAL. S-adenosyl-L-methionine contacts are provided by residues 228 to 229, Asp253, 273 to 274, and Arg289; these read GG and NF. His293 functions as the Proton acceptor in the catalytic mechanism.

The protein belongs to the class I-like SAM-binding methyltransferase superfamily. Cation-independent O-methyltransferase family. COMT subfamily.

The catalysed reaction is 6-demethylsterigmatocystin + S-adenosyl-L-methionine = sterigmatocystin + S-adenosyl-L-homocysteine + H(+). Its pathway is mycotoxin biosynthesis; aflatoxin biosynthesis. Functionally, demethylsterigmatocystin 6-O-methyltransferase; part of the gene cluster that mediates the biosynthesis of aflatoxins, a group of polyketide-derived furanocoumarins, and part of the most toxic and carcinogenic compounds among the known mycotoxins. The four major aflatoxins produced by A.parasiticus are aflatoxin B1 (AFB1), aflatoxin B2 (AFB2), aflatoxin G1 (AFG1) and aflatoxin G2 (AFG2). Within the aflatoxin pathway, the methyltransferase aflO then catalyzes the modification of demethylsterigmatocystin (DMST) to sterigmatocystin (ST), and of dihydrodemethylsterigmatocystin (DMDHST) to dihydrosterigmatocystin (DHST). The biosynthesis of aflatoxins begins with the norsolorinic acid synthase aflC that combines a hexanoyl starter unit produced by the fatty acid synthase aflA/aflB and 7 malonyl-CoA extender units to synthesize the precursor NOR. The second step is the conversion of NOR to averantin and requires the norsolorinic acid ketoreductase aflD, which catalyzes the dehydration of norsolorinic acid to form (1'S)-averantin. The norsolorinic acid reductases aflE and aflF may also play a role in the conversion of NOR to AVN. The cytochrome P450 monooxygenase aflG then catalyzes the hydroxylation of AVN to 5'hydroxyaverantin (HAVN). The next step is performed by the 5'-hydroxyaverantin dehydrogenase aflH that transforms HAVN to 5'-oxoaverantin (OAVN) which is further converted to averufin (AVF) by aflK that plays a dual role in the pathway, as a 5'-oxoaverantin cyclase that mediates conversion of 5'-oxoaverantin, as well as a versicolorin B synthase in a later step in the pathway. The averufin oxidase aflI catalyzes the conversion of AVF to versiconal hemiacetal acetate (VHA). VHA is then the substrate for the versiconal hemiacetal acetate esterase aflJ to yield versiconal (VAL). Versicolorin B synthase aflK then converts VAL to versicolorin B (VERB) by closing the bisfuran ring of aflatoxin which is required for DNA-binding, thus giving to aflatoxin its activity as a mutagen. Then, the activity of the versicolorin B desaturase aflL leads to versicolorin A (VERA). A branch point starts from VERB since it can also be converted to dihydrodemethylsterigmatocystin (DMDHST), probably also by aflL, VERA being a precursor for aflatoxins B1 and G1, and DMDHST for aflatoxins B2 and G2. Next, the versicolorin reductase aflM and the cytochrome P450 monooxygenase aflN are involved in conversion of VERA to demethylsterigmatocystin (DMST). AflX and aflY seem also involved in this step, through probable aflX-mediated epoxide ring-opening step following versicolorin A oxidation and aflY-mediated Baeyer-Villiger oxidation required for the formation of the xanthone ring. The methyltransferase aflO then leads to the modification of DMST to sterigmatocystin (ST), and of DMDHST to dihydrosterigmatocystin (DHST). Both ST and DHST are then substrates of the O-methyltransferase aflP to yield O-methylsterigmatocystin (OMST) and dihydro-O-methylsterigmatocystin (DHOMST), respectively. Finally OMST is converted to aflatoxins B1 and G1, and DHOMST to aflatoxins B2 and G2, via the action of several enzymes including O-methylsterigmatocystin oxidoreductase aflQ, the cytochrome P450 monooxygenase aflU, but also the NADH-dependent flavin oxidoreductase nadA which is specifically required for the synthesis of AFG1. This Aspergillus parasiticus (strain ATCC 56775 / NRRL 5862 / SRRC 143 / SU-1) protein is Demethylsterigmatocystin 6-O-methyltransferase.